We begin with the raw amino-acid sequence, 484 residues long: Carbohydrate sulfotransferase 7 (484 aa).

At M1 to C12 the chain is on the cytoplasmic side. A helical; Signal-anchor for type II membrane protein transmembrane segment spans residues K13–D33. Residues S34–V484 are Lumenal-facing. The interval R71–A90 is disordered. The N-linked (GlcNAc...) asparagine glycan is linked to N87. Position 108–114 (W108–F114) interacts with 3'-phosphoadenylyl sulfate. N184 is a glycosylation site (N-linked (GlcNAc...) asparagine). R276–S284 lines the 3'-phosphoadenylyl sulfate pocket. N405 is a glycosylation site (N-linked (GlcNAc...) asparagine). The residue at position 460 (S460) is a Phosphoserine. Over residues S460–E473 the composition is skewed to basic and acidic residues. The tract at residues S460–V484 is disordered.

The protein belongs to the sulfotransferase 1 family. Gal/GlcNAc/GalNAc subfamily. Widely expressed. Highly expressed in kidney. Expressed at lower level in heart, lung and liver.

It localises to the golgi apparatus membrane. It carries out the reaction chondroitin beta-D-glucuronate + n 3'-phosphoadenylyl sulfate = chondroitin 6'-sulfate + n adenosine 3',5'-bisphosphate + n H(+). Sulfotransferase that utilizes 3'-phospho-5'-adenylyl sulfate (PAPS) as sulfonate donor to catalyze the transfer of sulfate to position 6 of non-reducing N-acetylglucosamine (GlcNAc) residues. Preferentially acts on mannose-linked GlcNAc. Also able to catalyze the transfer of sulfate to position 6 of the N-acetylgalactosamine (GalNAc) residue of chondroitin. Also acts on core 2 mucin-type oligosaccharide and N-acetyllactosamine oligomer with a lower efficiency. Has weak or no activity toward keratan sulfate and oligosaccharides containing the Galbeta1-4GlcNAc. Catalyzes 6-O-sulfation of beta-benzyl GlcNAc but not alpha- or beta-benzyl GalNAc. This Mus musculus (Mouse) protein is Carbohydrate sulfotransferase 7 (Chst7).